Reading from the N-terminus, the 500-residue chain is Probable zinc metalloprotease MGYG_02393 (500 aa).

An N-terminal signal peptide occupies residues 1–24 (MHLSMGGLLPGLALLASANALALA). N-linked (GlcNAc...) asparagine glycosylation is found at Asn-61, Asn-103, and Asn-124. Zn(2+) is bound by residues His-174, Asp-194, and Glu-230. A glycan (N-linked (GlcNAc...) asparagine) is linked at Asn-245. Zn(2+) is bound at residue Asp-257. One can recognise a Fibronectin type-III domain in the interval 414–500 (MPRNVRVNTS…ERGVAVLPFP (87 aa)). N-linked (GlcNAc...) asparagine glycosylation is found at Asn-421 and Asn-427.

It belongs to the peptidase M28 family. M28B subfamily. It depends on Zn(2+) as a cofactor.

It is found in the secreted. In Arthroderma gypseum (strain ATCC MYA-4604 / CBS 118893) (Microsporum gypseum), this protein is Probable zinc metalloprotease MGYG_02393.